Consider the following 105-residue polypeptide: Meiotically up-regulated gene 52 protein (105 aa).

Functionally, has a role in meiosis. The sequence is that of Meiotically up-regulated gene 52 protein (mug52) from Schizosaccharomyces pombe (strain 972 / ATCC 24843) (Fission yeast).